Reading from the N-terminus, the 80-residue chain is Metallothionein-like protein type 2 (80 aa).

The protein belongs to the metallothionein superfamily. Type 15 family.

Functionally, metallothioneins have a high content of cysteine residues that bind various heavy metals. The sequence is that of Metallothionein-like protein type 2 from Brassica campestris (Field mustard).